The sequence spans 627 residues: Druantia protein DruC (627 aa).

The protein resides in the cytoplasm. In terms of biological role, component of antiviral defense system Druantia type I, composed of DruA, DruB, DruC, DruD and DruE. Expression of Druantia in E.coli (strain MG1655) confers resistance to phage lambda, SECphi18, SECphi27 and T4. This chain is Druantia protein DruC, found in Escherichia coli (strain UMEA 4076-1).